Here is a 328-residue protein sequence, read N- to C-terminus: MSLTPVTVAVTGAAGQIGYSLLFRIAHGDMLGRQRPVRLRLLEIPSALPALEGTVMELQDCAFPLLADVEIGSDPREVFDGAQLALLVGARPRTKGMERGDLLEANGAIFTEQGRALNDVADHDVRVVVTGNPANTNALIAQRNAPDIPASRFSALTRLDHNRAVAMLAAQTGASVDDVKHLSVWGNHSATQYPDLDHARVAGRPALDLVSREWVQDTFIPTVAKRGAAILEARGASSAASAANATIDHARDLMLGNHRGDWTSMSVVSDGSYGVPEGLVSSFPVTTSGGDWSIVQGLDISEFSRARIDASVAELESERAAVQELGLI.

12 to 18 (GAAGQIG) is a binding site for NAD(+). Residues Arg-93 and Arg-99 each contribute to the substrate site. Residues Asn-106, Gln-113, and 130–132 (TGN) each bind NAD(+). Positions 132 and 163 each coordinate substrate. Residue His-188 is the Proton acceptor of the active site.

Belongs to the LDH/MDH superfamily. MDH type 2 family.

It catalyses the reaction (S)-malate + NAD(+) = oxaloacetate + NADH + H(+). In terms of biological role, catalyzes the reversible oxidation of malate to oxaloacetate. In Kocuria rhizophila (strain ATCC 9341 / DSM 348 / NBRC 103217 / DC2201), this protein is Malate dehydrogenase.